The chain runs to 356 residues: Malate dehydrogenase, glyoxysomal (356 aa).

Residues 1 to 36 (MEDAAAAARRMERLASHLRPPASQMEESPLLRGSNC) constitute a glyoxysome transit peptide. NAD(+) contacts are provided by residues 51-57 (GASGGIG) and Asp77. 2 residues coordinate substrate: Arg124 and Arg130. Residues Asn137 and 160–162 (ISN) each bind NAD(+). Substrate contacts are provided by Asn162 and Arg196. His220 acts as the Proton acceptor in catalysis. NAD(+) is bound at residue Met271.

The protein belongs to the LDH/MDH superfamily. MDH type 1 family. In terms of assembly, homodimer.

The protein resides in the glyoxysome. The catalysed reaction is (S)-malate + NAD(+) = oxaloacetate + NADH + H(+). This is Malate dehydrogenase, glyoxysomal from Oryza sativa subsp. japonica (Rice).